Reading from the N-terminus, the 762-residue chain is Homeobox-leucine zipper protein MERISTEM L1 (762 aa).

A disordered region spans residues 13–72; it reads MFDMTPKNSENDLGITGSHEEDFETKSGAEVTMENPLEEELQDPNQRPNKKKRYHRHTQR. Basic and acidic residues predominate over residues 30–39; that stretch reads SHEEDFETKS. Positions 60–71 are enriched in basic residues; it reads PNKKKRYHRHTQ. The homeobox DNA-binding region spans 62-121; it reads KKKRYHRHTQRQIQELESFFKECPHPDDKQRKELSRELSLEPLQVKFWFQNKRTQMKAQH. Positions 110–192 form a coiled coil; it reads FQNKRTQMKA…DRISAIAAKY (83 aa). The 232-residue stretch at 253–484 folds into the START domain; sequence SEADKPMIVE…LDRQCERLAS (232 aa).

Belongs to the HD-ZIP homeobox family. Class IV subfamily. Interacts with GAI/RGA2, RGA/RGA1/GRS, RGL2/SCL19 and PDF2. Interacts with AIL7/PLT7, ANT, BBM and AIL1.

Its subcellular location is the nucleus. Probable transcription factor involved in cell specification and pattern formation during embryogenesis. Binds to the L1 box DNA sequence 5'-TAAATG[CT]A-3'. Plays a role in maintaining the identity of L1 cells, possibly by interacting with their L1 box or other target-gene promoters; binds to the LIP1 gene promoter and stimulates its expression upon imbibition. Acts as a positive regulator of gibberellins (GAs)-regulated epidermal gene expression (e.g. LIP1, LIP2, LTP1, FDH and PDF1). Functionally redundant to PDF2. Seems to promote cell differentiation. This chain is Homeobox-leucine zipper protein MERISTEM L1, found in Arabidopsis thaliana (Mouse-ear cress).